The primary structure comprises 321 residues: Protein BIG GRAIN 1-like E (321 aa).

Residues 134-217 form a disordered region; it reads AGSKKNKSKS…PPPYLNTPTK (84 aa). The span at 135 to 147 shows a compositional bias: basic residues; it reads GSKKNKSKSKSKT. The segment covering 172–206 has biased composition (low complexity); the sequence is ISHFFSSSRSTSTTTTTTASSSSKSLISSSSSGFR.

This sequence belongs to the BIG GRAIN 1 (BG1) plant protein family.

It localises to the cell membrane. In terms of biological role, involved in auxin transport. Regulator of the auxin signaling pathway. The sequence is that of Protein BIG GRAIN 1-like E from Arabidopsis thaliana (Mouse-ear cress).